Reading from the N-terminus, the 447-residue chain is UDP-N-acetylmuramoylalanine--D-glutamate ligase (447 aa).

Position 112 to 118 (112 to 118 (GTNGKST)) interacts with ATP.

It belongs to the MurCDEF family.

It localises to the cytoplasm. It carries out the reaction UDP-N-acetyl-alpha-D-muramoyl-L-alanine + D-glutamate + ATP = UDP-N-acetyl-alpha-D-muramoyl-L-alanyl-D-glutamate + ADP + phosphate + H(+). It functions in the pathway cell wall biogenesis; peptidoglycan biosynthesis. Its function is as follows. Cell wall formation. Catalyzes the addition of glutamate to the nucleotide precursor UDP-N-acetylmuramoyl-L-alanine (UMA). The protein is UDP-N-acetylmuramoylalanine--D-glutamate ligase of Legionella pneumophila (strain Lens).